A 151-amino-acid chain; its full sequence is Cytochrome c oxidase subunit 5B, mitochondrial (151 aa).

The N-terminal 17 residues, 1 to 17, are a transit peptide targeting the mitochondrion; the sequence is MLRTSLTKGARLTGTRF. At 18–85 the chain is on the mitochondrial matrix side; it reads VQTKALSKAT…EWGPRRPVHG (68 aa). Residues 86-108 traverse the membrane as a helical segment; sequence KGDVAFITKGVFLGLGISFGLFG. The Mitochondrial intermembrane portion of the chain corresponds to 109–151; it reads LVRLLANPETPKTMNREWQLKSDEYLKSKNANPWGGYSQVQSK.

It belongs to the cytochrome c oxidase IV family. As to quaternary structure, component of the cytochrome c oxidase (complex IV, CIV), a multisubunit enzyme composed of 12 subunits. The complex is composed of a catalytic core of 3 subunits COX1, COX2 and COX3, encoded in the mitochondrial DNA, and 9 supernumerary subunits COX4, COX5A (or COX5B), COX6, COX7, COX8, COX9, COX12, COX13 and COX26, which are encoded in the nuclear genome. COX5A is the predominant subunit V during aerobic/normoxic growth, it gets replaced by COX5B under anaerobic/hypoxic conditions. The complex exists as a monomer or a dimer and forms supercomplexes (SCs) in the inner mitochondrial membrane with a dimer of ubiquinol-cytochrome c oxidoreductase (cytochrome b-c1 complex, complex III, CIII), resulting in 2 different assemblies (supercomplexes III(2)IV and III(2)IV(2)).

It is found in the mitochondrion inner membrane. The protein operates within energy metabolism; oxidative phosphorylation. Component of the cytochrome c oxidase, the last enzyme in the mitochondrial electron transport chain which drives oxidative phosphorylation. The respiratory chain contains 3 multisubunit complexes succinate dehydrogenase (complex II, CII), ubiquinol-cytochrome c oxidoreductase (cytochrome b-c1 complex, complex III, CIII) and cytochrome c oxidase (complex IV, CIV), that cooperate to transfer electrons derived from NADH and succinate to molecular oxygen, creating an electrochemical gradient over the inner membrane that drives transmembrane transport and the ATP synthase. Cytochrome c oxidase is the component of the respiratory chain that catalyzes the reduction of oxygen to water. Electrons originating from reduced cytochrome c in the intermembrane space (IMS) are transferred via the dinuclear copper A center (CU(A)) of COX2 and heme A of COX1 to the active site in COX1, a binuclear center (BNC) formed by heme A3 and copper B (CU(B)). The BNC reduces molecular oxygen to 2 water molecules using 4 electrons from cytochrome c in the IMS and 4 protons from the mitochondrial matrix. This chain is Cytochrome c oxidase subunit 5B, mitochondrial (COX5B), found in Saccharomyces cerevisiae (strain ATCC 204508 / S288c) (Baker's yeast).